The following is a 1060-amino-acid chain: RNA-binding protein 27 (1060 aa).

Disordered stretches follow at residues 80-143 (PLEP…DGKW), 160-278 (YDWR…PKRR), and 319-416 (PPPG…PPPL). Basic and acidic residues-rich tracts occupy residues 84–102 (VKPEPKPLVQEKEEIKEEV) and 124–143 (SRSESSERRTREKKREDGKW). Basic residues predominate over residues 165–185 (GRSKSRSKSRGLSRSRSRSRG). Residues 186-211 (RSKDRDPNRNVEHRERSKFKSERNDL) are compositionally biased toward basic and acidic residues. 2 stretches are compositionally biased toward low complexity: residues 225–235 (SSEQYSSGAQS) and 255–268 (SWSNYYNNHSSSNS). The C3H1-type zinc finger occupies 273 to 301 (PPPKRRCRDYDERGFCVLGDLCQFDHGND). 2 stretches are compositionally biased toward pro residues: residues 319–356 (PPPGLPPPPPPGMLMPPMPGPGPGPGPGPGPGPGPGPG) and 371–384 (QPPPSVVLPIPRPP). Polar residues predominate over residues 387 to 402 (QSSLINSRDQPGTSAV). Thr-447 is modified (phosphothreonine). Arg-455 carries the post-translational modification Omega-N-methylarginine. The interval 572 to 594 (LTKKPWLGKQGNNNQSKPGFLRK) is disordered. The RRM domain occupies 600 to 674 (TKLEVKKIPQ…RFIRVLWHRE (75 aa)). The tract at residues 754-775 (HASTNQSDTSHLLNQTGGSSGE) is disordered. A compositionally biased stretch (polar residues) spans 755–770 (ASTNQSDTSHLLNQTG). Residues 810–887 (VQEVLKKKQE…KDELKTSSTV (78 aa)) are a coiled coil. Ser-928 carries the phosphoserine modification. The tract at residues 943-982 (GRGKTISSQGRGRGRGRGRGRGSLNHMVVDHRPKALPGGG) is disordered. A phosphoserine mark is found at Ser-1012 and Ser-1020. Residues 1014-1060 (HKPKVPSISTETEEEEVKEEETETSDLFLHDDDDEDEDEYESRSWRR) form a disordered region. Acidic residues-rich tracts occupy residues 1024-1037 (ETEEEEVKEEETET) and 1044-1053 (DDDDEDEDEY).

Its subcellular location is the cytoplasm. The protein localises to the nucleus speckle. In terms of biological role, may be involved in the turnover of nuclear polyadenylated (pA+) RNA. This chain is RNA-binding protein 27, found in Mus musculus (Mouse).